The primary structure comprises 1501 residues: MAKTSQAEGQPYKGYYNNKSQGQPYHGYYSGFNKSASAQIHHLARSLTQGVQSHYDDTYTTATMHPNGINPISDKTDPTLDPESPSFSSKRWVQNMWKLYQSDSEYYKPGKLGVAYKNLRVYGDAIESDYQTTVSNGVLKYARNIFNKFRKDNDDYSFDILKPMEGLIKPGEVTVVLGRPGAGCSTFLKTIACRTEGFHVADGSVISYDGITQDEIRNHLRGEVVYCAETETHFPNLTVGETLEFAALMKTPQNRPMGVSREEYAKHVVDVVMATYGLSHTKNTKVGNDFIRGISGGERKRLSIAEVTLVQASIQCWDNSTRGLDAATALEFISSLKTSASILNDTPLIAIYQCSQNAYDLFDKVIVMYEGYQIFFGSSQRAAAYFKKMGFVCQDRQTTPDFLTSITSPAERIIKPGYERLVPRTPKEFYRYWRRSPERQALLEEIDEYLDNCENYDQKQKIFEANNAKKAKHTYNKSSYTVSLPMQVRYIMKRYWDRMRGDIIVPLSTVAGNIAMALILSSVFYNLQPNSSSFYYRTSVMYYALLFNAYSSVLEIYNMYEGRAIVQKHREYALYPPMADAIGSIISDFPLKVVCSVLFNLILYFMVNFKREPGAFFFYLLISFCSTLFMSHLFRTIGAFTNSLAEAMTPSSLLLFALSTFSGFAIPVTYMLGWCKWIRWVNPLAYAYEALISNEFHGRVFDCSNIVPSGFGYPKTGNSVVCASIGALPGEFKVDGDLYLKLAFDYSYSNVWRNFGVLMAFIIFLFGTTIFFVQTNKSSISKGETLVFRRKNIRKMRKMEEDEEAYMDGMAPLDFSGSTEISDYSYDYMDRKLLDTSNIFHWRNLTYTVKIKSEERVILNNIDGWVKPGEVTALMGASGAGKTTLLNALSERLTTGVITSGTRMVNGGELDSSFQRSIGYVQQQDLHLETSTVREALKFSARLRQPNSVSIAEKDSYVEKIIDLLEMRTYVDAIVGVPGEGLNVEQRKRLTIAVELVARPKLLVFLDEPTSGLDSQTAWSICKLIRKLANHGQAILCTIHQPSAILLEEFDRLLLLQKGETVYFGEFGANCHTLIEYFERNGASKCPQHANPAEWMLGVIGAAPGTQANQDYFETWRNSPEYRAVQNELHRLEEMPGLASGEKEPDTNQAYAASFWKQYIFVVHRLFQQYWRTPSYIYSKFAMAVLCSLFNGFTYYKSQNSMQGLKNQMLSIFSMFVVLTTLAQQYVPLFVTQRDLYEARERPSKTFSWLAFIAAQITAEIPYQVLAATISFFSWYYPVGLYRNAVYSGAVTHRGVLMWLIMTLMFIYSSTLAQFCISWNQLADYAANWISLLLTISMIFCGVIATKDSMPKFWVFLYRCTPLTYLTSAMMSIGLGDSFVKCAPTEILTFPPQTPGVQKCQDYMGAYISIAGGYLLNPEATDNCKFCIMDKTNQFLDFMNISIHNFGRDTGIFIVFIVFNMAATVFSYWLFRVPKGNREKGSFFDKLPFLNGGGDTNHENV.

Residues 1 to 502 (MAKTSQAEGQ…KRYWDRMRGD (502 aa)) lie on the Cytoplasmic side of the membrane. Residues 58 to 87 (TYTTATMHPNGINPISDKTDPTLDPESPSF) form a disordered region. An ABC transporter 1 domain is found at 140–395 (KYARNIFNKF…FKKMGFVCQD (256 aa)). Residues 503–523 (IIVPLSTVAGNIAMALILSSV) form a helical membrane-spanning segment. Asn530 carries N-linked (GlcNAc...) asparagine glycosylation. 5 helical membrane passes run 540 to 560 (VMYY…YNMY), 589 to 609 (FPLK…MVNF), 614 to 634 (GAFF…SHLF), 653 to 673 (LLLF…YMLG), and 755 to 775 (FGVL…FVQT). Topologically, residues 776–1175 (NKSSISKGET…LFQQYWRTPS (400 aa)) are cytoplasmic. The 244-residue stretch at 840–1083 (FHWRNLTYTV…LIEYFERNGA (244 aa)) folds into the ABC transporter 2 domain. Residue 876–883 (GASGAGKT) coordinates ATP. Helical transmembrane passes span 1176–1196 (YIYS…FTYY), 1212–1232 (IFSM…LFVT), 1261–1281 (IPYQ…PVGL), 1297–1317 (LMWL…QFCI), 1325–1345 (YAAN…GVIA), 1353–1375 (FWVF…SIGL), and 1451–1471 (GIFI…YWLF).

This sequence belongs to the ABC transporter superfamily. ABCG family. PDR (TC 3.A.1.205) subfamily.

The protein resides in the membrane. In Candida albicans (Yeast), this protein is Opaque-specific ABC transporter CDR3 (CDR3).